The sequence spans 147 residues: Nucleoside diphosphate kinase (147 aa).

Residues Lys11, Phe59, Arg87, Thr93, Arg104, and Asn114 each coordinate ATP. His117 serves as the catalytic Pros-phosphohistidine intermediate.

The protein belongs to the NDK family. As to quaternary structure, homotetramer. The cofactor is Mg(2+).

It localises to the cytoplasm. The catalysed reaction is a 2'-deoxyribonucleoside 5'-diphosphate + ATP = a 2'-deoxyribonucleoside 5'-triphosphate + ADP. The enzyme catalyses a ribonucleoside 5'-diphosphate + ATP = a ribonucleoside 5'-triphosphate + ADP. Major role in the synthesis of nucleoside triphosphates other than ATP. The ATP gamma phosphate is transferred to the NDP beta phosphate via a ping-pong mechanism, using a phosphorylated active-site intermediate. The protein is Nucleoside diphosphate kinase of Anaeromyxobacter dehalogenans (strain 2CP-1 / ATCC BAA-258).